Reading from the N-terminus, the 88-residue chain is Period circadian protein (88 aa).

Positions 23–88 (VTNTSIAGTG…VTLTESLLNK (66 aa)) are disordered. Tandem repeats lie at residues 30–31 (GT), 33–34 (GT), 35–36 (GT), 37–38 (GT), 39–40 (GT), 41–42 (GT), 43–44 (GT), 45–46 (GT), 47–48 (GT), 49–50 (GT), 51–52 (GT), 53–54 (GT), 55–56 (GT), 57–58 (GT), 59–60 (GT), and 61–62 (GN). Residues 30 to 62 (GTGGTGTGTGTGTGTGTGTGTGTGTGTGTGTGN) form a 16 X 2 AA tandem repeats of G-[TN] region. A compositionally biased stretch (gly residues) spans 30–62 (GTGGTGTGTGTGTGTGTGTGTGTGTGTGTGTGN). A compositionally biased stretch (polar residues) spans 79–88 (VTLTESLLNK).

Forms a heterodimer with timeless (TIM); the complex then translocates into the nucleus. In terms of processing, phosphorylated with a circadian rhythmicity, probably by the double-time protein (dbt). Phosphorylation could be implicated in the stability of per monomer and in the formation of heterodimer per-tim.

The protein localises to the nucleus. Its subcellular location is the cytoplasm. It localises to the perinuclear region. In terms of biological role, essential for biological clock functions. Determines the period length of circadian and ultradian rhythms; an increase in PER dosage leads to shortened circadian rhythms and a decrease leads to lengthened circadian rhythms. Essential for the circadian rhythmicity of locomotor activity, eclosion behavior, and for the rhythmic component of the male courtship song that originates in the thoracic nervous system. The biological cycle depends on the rhythmic formation and nuclear localization of the TIM-PER complex. Light induces the degradation of TIM, which promotes elimination of PER. Nuclear activity of the heterodimer coordinatively regulates PER and TIM transcription through a negative feedback loop. Behaves as a negative element in circadian transcriptional loop. Does not appear to bind DNA, suggesting indirect transcriptional inhibition. The protein is Period circadian protein (per) of Drosophila teissieri (Fruit fly).